We begin with the raw amino-acid sequence, 950 residues long: Valine--tRNA ligase, mitochondrial (950 aa).

A mitochondrion-targeting transit peptide spans 1–90 (MFHFQRSFSS…ITIQDALARF (90 aa)). Positions 67 to 77 (PNITGKLHIGH) match the 'HIGH' region motif. Positions 556-560 (KMSKS) match the 'KMSKS' region motif. Lysine 559 provides a ligand contact to ATP.

It belongs to the class-I aminoacyl-tRNA synthetase family.

The protein resides in the mitochondrion. It catalyses the reaction tRNA(Val) + L-valine + ATP = L-valyl-tRNA(Val) + AMP + diphosphate. This is Valine--tRNA ligase, mitochondrial (vas1) from Schizosaccharomyces pombe (strain 972 / ATCC 24843) (Fission yeast).